The primary structure comprises 1479 residues: Type VII secretion system protein EssC (1479 aa).

Over 1–229 (MHKLIIKYNK…RPPQPIQKNN (229 aa)) the chain is Cytoplasmic. A helical membrane pass occupies residues 230–252 (TVIWRSIIPPLVMIALTVVIFLV). Over 253 to 256 (RPIG) the chain is Extracellular. Residues 257 to 279 (IYILMMIGMSSVTIVFGITTYFS) traverse the membrane as a helical segment. Over 280–1479 (EKKKYNKDVE…QAYQKIRWFK (1200 aa)) the chain is Cytoplasmic. 2 consecutive FtsK domains span residues 652-846 (DDIL…QDSN) and 997-1183 (QGPM…SEVS). Residues 672–679 (GTTGSGKS) and 1014–1021 (GSPGYGRT) each bind ATP.

Belongs to the EssC family. As to quaternary structure, homooligomer. Interacts with EsaE.

The protein localises to the cell membrane. Functionally, component of the type VII secretion system (Ess). Required for the secretion of substrates including EsxA and EsxB. However, unable to support secretion of the substrate protein EsxC. The chain is Type VII secretion system protein EssC from Staphylococcus aureus (strain MSSA476).